A 276-amino-acid chain; its full sequence is Large ribosomal subunit protein uL2 (276 aa).

The disordered stretch occupies residues Met-225–Lys-276. The segment covering Lys-257–Lys-276 has biased composition (basic residues).

It belongs to the universal ribosomal protein uL2 family. Part of the 50S ribosomal subunit. Forms a bridge to the 30S subunit in the 70S ribosome.

Its function is as follows. One of the primary rRNA binding proteins. Required for association of the 30S and 50S subunits to form the 70S ribosome, for tRNA binding and peptide bond formation. It has been suggested to have peptidyltransferase activity; this is somewhat controversial. Makes several contacts with the 16S rRNA in the 70S ribosome. This Desulfitobacterium hafniense (strain Y51) protein is Large ribosomal subunit protein uL2.